A 395-amino-acid polypeptide reads, in one-letter code: MTQIPTIKQVRAFTLKGGGADYHDQSDGHWIDDHIATPMAKYPEYRQSRRSFGINVLGTLVVEIEDSAGRVGFAVTTGGEPAAYIVEKHLARFLEGARVTDIERIWDQMYLSTLYYGRKGIVINTISGVDLALWDLLGKVRGEPVHQLLGGAVRDELQFYATGARPDLAQKMGFIGGKMPLHHGPAEGEEGLRRNLQELATMRERVGPDFWLMLDCWMSLDVNYATRLAQGAQAHGLKWIEEALPPDDYWGYAALRKNVPTGMLVTTGEHEATRWGFRQLLEMGCCDIIQPDVGWCGGITELLKISALADAHQALVIPHGSSVYSYHFVATRHNSPFAEFLMMAPKADEVVPMFHPQLLGEPVPVNGRMRLSALDRPGFGVELNPECALHRPYTH.

His-23 and Arg-49 together coordinate substrate. Mg(2+) contacts are provided by Asp-215, Glu-241, and Glu-269. Catalysis depends on His-319, which acts as the Proton acceptor. Position 339 (Glu-339) interacts with substrate.

Belongs to the mandelate racemase/muconate lactonizing enzyme family. RhamD subfamily. Homooctamer; tetramer of dimers. Requires Mg(2+) as cofactor.

The enzyme catalyses L-rhamnonate = 2-dehydro-3-deoxy-L-rhamnonate + H2O. In terms of biological role, catalyzes the dehydration of L-rhamnonate to 2-keto-3-deoxy-L-rhamnonate (KDR). The chain is L-rhamnonate dehydratase from Delftia acidovorans (strain DSM 14801 / SPH-1).